The chain runs to 476 residues: Glutamyl-tRNA(Gln) amidotransferase subunit A (476 aa).

Catalysis depends on charge relay system residues Lys-77 and Ser-152. The active-site Acyl-ester intermediate is Ser-176.

It belongs to the amidase family. GatA subfamily. In terms of assembly, heterotrimer of A, B and C subunits.

The enzyme catalyses L-glutamyl-tRNA(Gln) + L-glutamine + ATP + H2O = L-glutaminyl-tRNA(Gln) + L-glutamate + ADP + phosphate + H(+). Its function is as follows. Allows the formation of correctly charged Gln-tRNA(Gln) through the transamidation of misacylated Glu-tRNA(Gln) in organisms which lack glutaminyl-tRNA synthetase. The reaction takes place in the presence of glutamine and ATP through an activated gamma-phospho-Glu-tRNA(Gln). This chain is Glutamyl-tRNA(Gln) amidotransferase subunit A, found in Acidobacterium capsulatum (strain ATCC 51196 / DSM 11244 / BCRC 80197 / JCM 7670 / NBRC 15755 / NCIMB 13165 / 161).